Consider the following 207-residue polypeptide: LexA repressor (207 aa).

The segment at residues 28–48 (VREIGEAVGLASSSTVHGHLS) is a DNA-binding region (H-T-H motif). Residues Ser130 and Lys168 each act as for autocatalytic cleavage activity in the active site.

It belongs to the peptidase S24 family. In terms of assembly, homodimer.

It catalyses the reaction Hydrolysis of Ala-|-Gly bond in repressor LexA.. Functionally, represses a number of genes involved in the response to DNA damage (SOS response), including recA and lexA. In the presence of single-stranded DNA, RecA interacts with LexA causing an autocatalytic cleavage which disrupts the DNA-binding part of LexA, leading to derepression of the SOS regulon and eventually DNA repair. This is LexA repressor from Staphylococcus aureus (strain MSSA476).